A 609-amino-acid polypeptide reads, in one-letter code: Chaperone protein DnaK (609 aa).

Position 172 is a phosphothreonine; by autocatalysis (T172). The segment at 578–609 is disordered; the sequence is QAQAQQQAGAGGAAKKDENVVDAEFEEVKDDK. Residues 597–609 show a composition bias toward acidic residues; the sequence is VVDAEFEEVKDDK.

The protein belongs to the heat shock protein 70 family.

Its function is as follows. Acts as a chaperone. This chain is Chaperone protein DnaK, found in Geobacillus sp. (strain WCH70).